Consider the following 266-residue polypeptide: Tryptophan synthase alpha chain (266 aa).

Active-site proton acceptor residues include Glu-49 and Asp-60.

The protein belongs to the TrpA family. In terms of assembly, tetramer of two alpha and two beta chains.

The enzyme catalyses (1S,2R)-1-C-(indol-3-yl)glycerol 3-phosphate + L-serine = D-glyceraldehyde 3-phosphate + L-tryptophan + H2O. It functions in the pathway amino-acid biosynthesis; L-tryptophan biosynthesis; L-tryptophan from chorismate: step 5/5. In terms of biological role, the alpha subunit is responsible for the aldol cleavage of indoleglycerol phosphate to indole and glyceraldehyde 3-phosphate. The polypeptide is Tryptophan synthase alpha chain (Opitutus terrae (strain DSM 11246 / JCM 15787 / PB90-1)).